The chain runs to 364 residues: DNA replication and repair protein RecF (364 aa).

30–37 (GNNGMGKT) contributes to the ATP binding site.

The protein belongs to the RecF family.

The protein localises to the cytoplasm. The RecF protein is involved in DNA metabolism; it is required for DNA replication and normal SOS inducibility. RecF binds preferentially to single-stranded, linear DNA. It also seems to bind ATP. This Porphyromonas gingivalis (strain ATCC 33277 / DSM 20709 / CIP 103683 / JCM 12257 / NCTC 11834 / 2561) protein is DNA replication and repair protein RecF.